The following is a 339-amino-acid chain: tRNA N6-adenosine threonylcarbamoyltransferase (339 aa).

The Fe cation site is built by His111 and His115. Substrate-binding positions include 139 to 143, Asp172, Gly185, Asp189, and Asn280; that span reads LVSGG. Asp308 is a binding site for Fe cation.

This sequence belongs to the KAE1 / TsaD family. Fe(2+) is required as a cofactor.

The protein resides in the cytoplasm. The catalysed reaction is L-threonylcarbamoyladenylate + adenosine(37) in tRNA = N(6)-L-threonylcarbamoyladenosine(37) in tRNA + AMP + H(+). Required for the formation of a threonylcarbamoyl group on adenosine at position 37 (t(6)A37) in tRNAs that read codons beginning with adenine. Is involved in the transfer of the threonylcarbamoyl moiety of threonylcarbamoyl-AMP (TC-AMP) to the N6 group of A37, together with TsaE and TsaB. TsaD likely plays a direct catalytic role in this reaction. The sequence is that of tRNA N6-adenosine threonylcarbamoyltransferase from Bacteroides fragilis (strain ATCC 25285 / DSM 2151 / CCUG 4856 / JCM 11019 / LMG 10263 / NCTC 9343 / Onslow / VPI 2553 / EN-2).